Here is a 200-residue protein sequence, read N- to C-terminus: GTP-binding protein rho2 (200 aa).

Residue 15–22 participates in GTP binding; the sequence is GDGACGKT. Residues 37-45 carry the Effector region motif; it reads YVPTVFENY. Residues 62–66 and 120–123 contribute to the GTP site; these read DTAGQ and MKAD. At cysteine 197 the chain carries Cysteine methyl ester. The S-geranylgeranyl cysteine moiety is linked to residue cysteine 197. Residues 198-200 constitute a propeptide, removed in mature form; the sequence is IIS.

The protein belongs to the small GTPase superfamily. Rho family. Interacts with pck2.

Its subcellular location is the cell membrane. In terms of biological role, involved in cell morphogenesis, the maintenance of growth direction, control of polarity and of cell wall integrity. Regulates the synthesis of alpha-D-glucan through activation of pck2. The chain is GTP-binding protein rho2 (rho2) from Schizosaccharomyces pombe (strain 972 / ATCC 24843) (Fission yeast).